Reading from the N-terminus, the 305-residue chain is Nitrogen assimilation regulatory protein nac (305 aa).

Residues 1-58 (MNFRRLKYFVKIVDIGSLTQAAEVLHIAQPALSQQVATLEGELNQQLLIRTKRGVTPT) enclose the HTH lysR-type domain. The segment at residues 18-37 (LTQAAEVLHIAQPALSQQVA) is a DNA-binding region (H-T-H motif).

This sequence belongs to the LysR transcriptional regulatory family.

In terms of biological role, transcriptional activator for the hut, put and ure operons and repressor for the gdh and gltB operons in response to nitrogen limitation. Negative regulator of its own expression. The protein is Nitrogen assimilation regulatory protein nac (nac) of Escherichia coli (strain K12).